The chain runs to 364 residues: Uroporphyrinogen decarboxylase (364 aa).

Substrate contacts are provided by residues 28 to 32 (RQAGR), Phe47, Asp78, Tyr158, Thr213, and His334.

This sequence belongs to the uroporphyrinogen decarboxylase family. As to quaternary structure, homodimer.

It localises to the cytoplasm. It catalyses the reaction uroporphyrinogen III + 4 H(+) = coproporphyrinogen III + 4 CO2. Its pathway is porphyrin-containing compound metabolism; protoporphyrin-IX biosynthesis; coproporphyrinogen-III from 5-aminolevulinate: step 4/4. Functionally, catalyzes the decarboxylation of four acetate groups of uroporphyrinogen-III to yield coproporphyrinogen-III. In Ralstonia nicotianae (strain ATCC BAA-1114 / GMI1000) (Ralstonia solanacearum), this protein is Uroporphyrinogen decarboxylase.